A 210-amino-acid polypeptide reads, in one-letter code: NAD(P)H-quinone oxidoreductase subunit I (210 aa).

4Fe-4S ferredoxin-type domains are found at residues 55 to 84 (GRIHYEFDKCIACEVCVRVCPINLPVVDWV) and 95 to 124 (RNYSIDFGVCIFCGNCVEYCPTNCLSMTEE). Cysteine 64, cysteine 67, cysteine 70, cysteine 74, cysteine 104, cysteine 107, cysteine 110, and cysteine 114 together coordinate [4Fe-4S] cluster.

This sequence belongs to the complex I 23 kDa subunit family. In terms of assembly, NDH-1 is composed of at least 11 different subunits. It depends on [4Fe-4S] cluster as a cofactor.

It is found in the cellular thylakoid membrane. The catalysed reaction is a plastoquinone + NADH + (n+1) H(+)(in) = a plastoquinol + NAD(+) + n H(+)(out). It carries out the reaction a plastoquinone + NADPH + (n+1) H(+)(in) = a plastoquinol + NADP(+) + n H(+)(out). Its function is as follows. NDH-1 shuttles electrons from an unknown electron donor, via FMN and iron-sulfur (Fe-S) centers, to quinones in the respiratory and/or the photosynthetic chain. The immediate electron acceptor for the enzyme in this species is believed to be plastoquinone. Couples the redox reaction to proton translocation, and thus conserves the redox energy in a proton gradient. This chain is NAD(P)H-quinone oxidoreductase subunit I, found in Synechococcus sp. (strain CC9902).